The chain runs to 532 residues: 56 kDa type-specific antigen (532 aa).

The signal sequence occupies residues 1-22; that stretch reads MKKIMLIASAMSALSLPFSASA. A helical transmembrane segment spans residues 67–87; the sequence is TNGLPFGGTLAAGMTIAPGFR. The disordered stretch occupies residues 401–428; that stretch reads QEEDAKNQGEGDCKQQQGTSEKSKKGKD. Over residues 403-413 the composition is skewed to basic and acidic residues; the sequence is EDAKNQGEGDC. A helical transmembrane segment spans residues 480–500; the sequence is TGMVASGALGVAINAAEGVYV.

The protein resides in the cell membrane. In terms of biological role, may be an adherent factor for rickettsial adsorption to the host-cell surface and a determinant of virulence of individual rickettsial strain. It is the major outer membrane protein. The polypeptide is 56 kDa type-specific antigen (Orientia tsutsugamushi (Rickettsia tsutsugamushi)).